The primary structure comprises 183 residues: Shikimate kinase (183 aa).

15 to 20 (GSGKST) is a binding site for ATP. S19 provides a ligand contact to Mg(2+). Substrate contacts are provided by D37, R61, and G85. Position 123 (R123) interacts with ATP. R142 contacts substrate.

Belongs to the shikimate kinase family. As to quaternary structure, monomer. Requires Mg(2+) as cofactor.

It is found in the cytoplasm. It carries out the reaction shikimate + ATP = 3-phosphoshikimate + ADP + H(+). Its pathway is metabolic intermediate biosynthesis; chorismate biosynthesis; chorismate from D-erythrose 4-phosphate and phosphoenolpyruvate: step 5/7. In terms of biological role, catalyzes the specific phosphorylation of the 3-hydroxyl group of shikimic acid using ATP as a cosubstrate. This Paracidovorax citrulli (strain AAC00-1) (Acidovorax citrulli) protein is Shikimate kinase.